A 78-amino-acid polypeptide reads, in one-letter code: UPF0401 protein YubL (78 aa).

It belongs to the UPF0401 family.

The polypeptide is UPF0401 protein YubL (yubL) (Salmonella typhi).